Consider the following 263-residue polypeptide: Adaptin ear-binding coat-associated protein 2 (263 aa).

Disordered regions lie at residues 167–191 (KKEG…LPPP) and 209–263 (GGSL…WVQF). Position 181 is a phosphoserine (S181). 2 short sequence motifs (WXXF motif) span residues 218 to 221 (GSGG) and 238 to 241 (DIWG). The span at 246–263 (STGSPSSQSQPGTGWVQF) shows a compositional bias: low complexity.

The protein belongs to the NECAP family. Interacts with AP1G1 and AP2A1 components of the adapter protein complexes AP-1 and AP-2. Interacts with the GAE domain proteins GGA1, GGA2 and GGA3. Expressed in brain, heart, kidney, liver and lung (at protein level).

The protein localises to the cytoplasmic vesicle. The protein resides in the clathrin-coated vesicle membrane. It is found in the cell membrane. In terms of biological role, involved in endocytosis. This is Adaptin ear-binding coat-associated protein 2 (Necap2) from Rattus norvegicus (Rat).